The chain runs to 80 residues: Exodeoxyribonuclease 7 small subunit (80 aa).

Belongs to the XseB family. Heterooligomer composed of large and small subunits.

The protein localises to the cytoplasm. The catalysed reaction is Exonucleolytic cleavage in either 5'- to 3'- or 3'- to 5'-direction to yield nucleoside 5'-phosphates.. In terms of biological role, bidirectionally degrades single-stranded DNA into large acid-insoluble oligonucleotides, which are then degraded further into small acid-soluble oligonucleotides. The sequence is that of Exodeoxyribonuclease 7 small subunit from Escherichia coli (strain SE11).